The sequence spans 92 residues: Acylphosphatase (92 aa).

Residues 3–92 enclose the Acylphosphatase-like domain; the sequence is TKHVLVSGIV…GPRSTHFEVT (90 aa). Residues R18 and N36 contribute to the active site.

This sequence belongs to the acylphosphatase family.

The enzyme catalyses an acyl phosphate + H2O = a carboxylate + phosphate + H(+). This chain is Acylphosphatase (acyP), found in Alcanivorax borkumensis (strain ATCC 700651 / DSM 11573 / NCIMB 13689 / SK2).